The primary structure comprises 131 residues: Small ribosomal subunit protein uS8 (131 aa).

The protein belongs to the universal ribosomal protein uS8 family. As to quaternary structure, part of the 30S ribosomal subunit. Contacts proteins S5 and S12.

Functionally, one of the primary rRNA binding proteins, it binds directly to 16S rRNA central domain where it helps coordinate assembly of the platform of the 30S subunit. This chain is Small ribosomal subunit protein uS8, found in Nitrosomonas eutropha (strain DSM 101675 / C91 / Nm57).